A 394-amino-acid polypeptide reads, in one-letter code: Elongation factor Tu (394 aa).

Positions 10 to 204 constitute a tr-type G domain; that stretch reads KPHINVGTIG…FLDSYIPEPK (195 aa). The tract at residues 19 to 26 is G1; it reads GHVDHGKT. 19–26 serves as a coordination point for GTP; that stretch reads GHVDHGKT. Threonine 26 serves as a coordination point for Mg(2+). Positions 60–64 are G2; that stretch reads GITIN. A G3 region spans residues 81 to 84; the sequence is DCPG. Residues 81–85 and 136–139 each bind GTP; these read DCPGH and NKCD. The segment at 136–139 is G4; that stretch reads NKCD. The tract at residues 174-176 is G5; that stretch reads SAL.

The protein belongs to the TRAFAC class translation factor GTPase superfamily. Classic translation factor GTPase family. EF-Tu/EF-1A subfamily. As to quaternary structure, monomer.

The protein localises to the cytoplasm. It catalyses the reaction GTP + H2O = GDP + phosphate + H(+). In terms of biological role, GTP hydrolase that promotes the GTP-dependent binding of aminoacyl-tRNA to the A-site of ribosomes during protein biosynthesis. In Buchnera aphidicola subsp. Acyrthosiphon pisum (strain 5A), this protein is Elongation factor Tu.